The chain runs to 211 residues: Uracil phosphoribosyltransferase (211 aa).

5-phospho-alpha-D-ribose 1-diphosphate contacts are provided by residues arginine 78, arginine 103, and 130–138 (DPMLATGGT). Residues isoleucine 195 and 200–202 (GDA) each bind uracil. Residue aspartate 201 coordinates 5-phospho-alpha-D-ribose 1-diphosphate.

The protein belongs to the UPRTase family. The cofactor is Mg(2+).

The catalysed reaction is UMP + diphosphate = 5-phospho-alpha-D-ribose 1-diphosphate + uracil. It functions in the pathway pyrimidine metabolism; UMP biosynthesis via salvage pathway; UMP from uracil: step 1/1. Allosterically activated by GTP. Functionally, catalyzes the conversion of uracil and 5-phospho-alpha-D-ribose 1-diphosphate (PRPP) to UMP and diphosphate. The chain is Uracil phosphoribosyltransferase from Streptomyces coelicolor (strain ATCC BAA-471 / A3(2) / M145).